Reading from the N-terminus, the 345-residue chain is Cuticle collagen 14 (345 aa).

Triple-helical region regions lie at residues 156 to 185, 207 to 263, and 268 to 333; these read GPPGPAGDGGRDGADGVDGTPGEIGPPGPP, GDGG…PGTY, and GPAG…PGSC. Residues 161-345 are disordered; that stretch reads AGDGGRDGAD…CPPARLAPGY (185 aa). Pro residues-rich tracts occupy residues 179-191, 198-223, and 278-290; these read IGPPGPPAPPGPD, PQCPCEAPPGDGGPPGQPGPDGPPGA, and RPGPPGQPGPAGP. Gly residues predominate over residues 292–304; that stretch reads GENGKGGGQGPSG.

This sequence belongs to the cuticular collagen family. As to quaternary structure, collagen polypeptide chains are complexed within the cuticle by disulfide bonds and other types of covalent cross-links.

Functionally, nematode cuticles are composed largely of collagen-like proteins. The cuticle functions both as an exoskeleton and as a barrier to protect the worm from its environment. In Caenorhabditis elegans, this protein is Cuticle collagen 14 (col-14).